We begin with the raw amino-acid sequence, 256 residues long: Major prion protein (256 aa).

The N-terminal stretch at 1-24 is a signal peptide; sequence MVKSHIGSWILVLFVAMWSDVGLC. An interaction with GRB2, ERI3 and SYN1 region spans residues 25–233; that stretch reads KKRPKPGGGW…ESQAYYQRGA (209 aa). The tract at residues 28–110 is disordered; sequence PKPGGGWNTG…QWNKPSKPKT (83 aa). 5 repeat units span residues 54-62, 63-70, 71-78, 79-86, and 87-95. Residues 54–95 form a 5 X 8 AA tandem repeats of P-H-G-G-G-W-G-Q region; that stretch reads PQGGGGWGQPHGGGWGQPHGGGWGQPHGGGWGQPHGGGGWGQ. The span at 55–97 shows a compositional bias: gly residues; it reads QGGGGWGQPHGGGWGQPHGGGWGQPHGGGWGQPHGGGGWGQGG. The Cu(2+) site is built by histidine 64, glycine 65, glycine 66, histidine 72, glycine 73, glycine 74, histidine 80, glycine 81, glycine 82, histidine 88, glycine 90, and glycine 91. Residues cysteine 182 and cysteine 217 are joined by a disulfide bond. N-linked (GlcNAc...) asparagine glycans are attached at residues asparagine 184 and asparagine 200. Alanine 233 carries GPI-anchor amidated alanine lipidation. Residues 234–256 constitute a propeptide, removed in mature form; the sequence is SVILFSSPPVILLISFLIFLIVG.

Belongs to the prion family. Monomer and homodimer. Has a tendency to aggregate into amyloid fibrils containing a cross-beta spine, formed by a steric zipper of superposed beta-strands. Soluble oligomers may represent an intermediate stage on the path to fibril formation. Copper binding may promote oligomerization. Interacts with GRB2, APP, ERI3/PRNPIP and SYN1. Mislocalized cytosolically exposed PrP interacts with MGRN1; this interaction alters MGRN1 subcellular location and causes lysosomal enlargement. Interacts with KIAA1191.

The protein resides in the cell membrane. Its subcellular location is the golgi apparatus. Its function is as follows. Its primary physiological function is unclear. Has cytoprotective activity against internal or environmental stresses. May play a role in neuronal development and synaptic plasticity. May be required for neuronal myelin sheath maintenance. May play a role in iron uptake and iron homeostasis. Soluble oligomers are toxic to cultured neuroblastoma cells and induce apoptosis (in vitro). Association with GPC1 (via its heparan sulfate chains) targets PRNP to lipid rafts. Also provides Cu(2+) or Zn(2+) for the ascorbate-mediated GPC1 deaminase degradation of its heparan sulfate side chains. The polypeptide is Major prion protein (PRNP) (Budorcas taxicolor (Golden takin)).